The sequence spans 117 residues: Ig heavy chain V region 3 (117 aa).

A signal peptide spans 1–19 (MGWSCIILFLVATATGVHS). The interval 20 to 49 (QVQLQQPGAELVRPGSSVKLSCKASGYTFT) is framework-1. Cys-41 and Cys-115 are disulfide-bonded. Residues 50–54 (SYWMD) form a complementarity-determining-1 region. The segment at 55–68 (WVKQRPGQGLEWIG) is framework-2. The interval 69–85 (NIYPSDSETHYNQKFKD) is complementarity-determining-2. A framework-3 region spans residues 86–117 (KATLTVDKSSSTAYMQLSSLTSEDSAVYYCAR).

This chain is Ig heavy chain V region 3 (Ighv1-61), found in Mus musculus (Mouse).